The primary structure comprises 133 residues: Small ribosomal subunit protein uS8 (133 aa).

Belongs to the universal ribosomal protein uS8 family. Part of the 30S ribosomal subunit. Contacts proteins S5 and S12.

One of the primary rRNA binding proteins, it binds directly to 16S rRNA central domain where it helps coordinate assembly of the platform of the 30S subunit. This is Small ribosomal subunit protein uS8 from Amoebophilus asiaticus (strain 5a2).